The following is a 1741-amino-acid chain: Meiosis regulator and mRNA stability factor 1 (1741 aa).

The region spanning 345 to 482 (IGVFWDIENC…ALLHHAHELV (138 aa)) is the NYN domain. Disordered regions lie at residues 594 to 636 (KVKS…GSVI), 659 to 678 (TENH…SHAA), and 683 to 716 (LTTK…PVDK). Residues 659-668 (TENHQEHLRE) are compositionally biased toward basic and acidic residues. The region spanning 788–867 (ADIQISNIDY…KRIQVSLATG (80 aa)) is the RRM domain. HTH OST-type domains lie at 872 to 946 (SLSL…SPLG), 1000 to 1076 (SLKT…HNKP), 1097 to 1171 (QLIQ…LTHR), 1173 to 1248 (QVKR…IPKR), 1257 to 1332 (RTKQ…TEVE), 1333 to 1408 (QVKA…INRK), 1409 to 1483 (SLRT…VRLT), and 1484 to 1558 (NLYM…LKND). Positions 1684–1700 (KLTSGSVASSTAENTSV) are enriched in polar residues. Positions 1684 to 1727 (KLTSGSVASSTAENTSVPPRHSSETQLNKEAMDSPAKKQHKNKV) are disordered.

The protein localises to the peroxisome. Functionally, essential regulator of oogenesis required for female meiotic progression to repress transposable elements and preventing their mobilization, which is essential for the germline integrity. In Gallus gallus (Chicken), this protein is Meiosis regulator and mRNA stability factor 1.